The primary structure comprises 437 residues: GTP-binding protein ERG (437 aa).

A compositionally biased stretch (polar residues) spans 39-50; sequence QPNLDEPTSINE. Residues 39 to 65 are disordered; that stretch reads QPNLDEPTSINEDGSSSDSVFDSSQYP. Residues 51–62 show a composition bias toward low complexity; the sequence is DGSSSDSVFDSS. 2 positions are modified to phosphoserine: Ser-111 and Ser-112. Positions 152 to 333 constitute an Era-type G domain; sequence KSLNVGIIGP…LMDQAVKKPW (182 aa). Residues 160 to 167 are G1; sequence GPPNAGKS. Residue 160–167 participates in GTP binding; the sequence is GPPNAGKS. Residues 186–190 form a G2 region; that stretch reads NTTTH. Residues 207 to 210 form a G3 region; it reads DTPG. Residues 207–211 and 279–282 contribute to the GTP site; these read DTPGL and NKVD. The G4 stretch occupies residues 279–282; that stretch reads NKVD. The segment at 309 to 311 is G5; it reads ISG. Positions 361-437 constitute a KH type-2 domain; that stretch reads VHQEIPYGLE…VHLILQVKLK (77 aa).

Belongs to the TRAFAC class TrmE-Era-EngA-EngB-Septin-like GTPase superfamily. Era GTPase family.

Its function is as follows. Has a crucial role in plant growth and development, possibly by influencing mitochondrial division. The protein is GTP-binding protein ERG (ERG) of Arabidopsis thaliana (Mouse-ear cress).